Here is a 397-residue protein sequence, read N- to C-terminus: Citrate synthase (397 aa).

Active-site residues include H266 and D320.

Belongs to the citrate synthase family.

It carries out the reaction oxaloacetate + acetyl-CoA + H2O = citrate + CoA + H(+). It functions in the pathway carbohydrate metabolism; tricarboxylic acid cycle; isocitrate from oxaloacetate: step 1/2. In Synechocystis sp. (strain ATCC 27184 / PCC 6803 / Kazusa), this protein is Citrate synthase (gltA).